The chain runs to 164 residues: Putative pre-16S rRNA nuclease (164 aa).

The protein belongs to the YqgF nuclease family.

It localises to the cytoplasm. In terms of biological role, could be a nuclease involved in processing of the 5'-end of pre-16S rRNA. This is Putative pre-16S rRNA nuclease from Rhizobium rhizogenes (strain K84 / ATCC BAA-868) (Agrobacterium radiobacter).